Reading from the N-terminus, the 307-residue chain is N-acetylmuramic acid 6-phosphate etherase 2 (307 aa).

The 164-residue stretch at 62–225 (ITAAFKQGGR…TTASMIRLGK (164 aa)) folds into the SIS domain. E90 functions as the Proton donor in the catalytic mechanism. E121 is a catalytic residue.

Belongs to the GCKR-like family. MurNAc-6-P etherase subfamily. Homodimer.

It carries out the reaction N-acetyl-D-muramate 6-phosphate + H2O = N-acetyl-D-glucosamine 6-phosphate + (R)-lactate. It participates in amino-sugar metabolism; 1,6-anhydro-N-acetylmuramate degradation. The protein operates within amino-sugar metabolism; N-acetylmuramate degradation. Its pathway is cell wall biogenesis; peptidoglycan recycling. Its function is as follows. Specifically catalyzes the cleavage of the D-lactyl ether substituent of MurNAc 6-phosphate, producing GlcNAc 6-phosphate and D-lactate. Together with AnmK, is also required for the utilization of anhydro-N-acetylmuramic acid (anhMurNAc) either imported from the medium or derived from its own cell wall murein, and thus plays a role in cell wall recycling. The polypeptide is N-acetylmuramic acid 6-phosphate etherase 2 (Vibrio cholerae serotype O1 (strain ATCC 39315 / El Tor Inaba N16961)).